Consider the following 82-residue polypeptide: uncharacterized protein (82 aa).

Basic and acidic residues predominate over residues 1–11; the sequence is MKARGSRENAS. The tract at residues 1–25 is disordered; sequence MKARGSRENASKRRPSQTQYDTHLR. A compositionally biased stretch (polar residues) spans 16 to 25; sequence SQTQYDTHLR.

This is an uncharacterized protein from Human cytomegalovirus (strain AD169) (HHV-5).